We begin with the raw amino-acid sequence, 397 residues long: UDP-galactose translocator (397 aa).

Positions 1 to 21 (MAAVGSGGSNAAAGPGAVSAG) are disordered. A run of 10 helical transmembrane segments spans residues 3 to 23 (AVGS…AGSL), 37 to 57 (YISL…IRYA), 65 to 85 (FFAT…CLLL), 97 to 117 (LALF…KLAV), 140 to 160 (TFQV…VLML), 169 to 189 (WASL…QAGG), 200 to 220 (GAGL…GVYF), 238 to 258 (LGLF…GTAV), 269 to 289 (PAVW…AVVV), and 315 to 335 (LFGF…IGAV). Positions 9-21 (SNAAAGPGAVSAG) are enriched in low complexity. Residues 355-397 (ASASTSGPCTHQQPPGQPPPPKLSSHRADLSTEPFLPKSVLVK) are disordered.

Belongs to the nucleotide-sugar transporter family. SLC35A subfamily. As to quaternary structure, interacts with SLC35A3; the interaction is reduced in the presence of SLC35A4. Found in a complex with SLC35A3 and SLC35A4.

Its subcellular location is the golgi apparatus membrane. It carries out the reaction UMP(out) + UDP-alpha-D-galactose(in) = UMP(in) + UDP-alpha-D-galactose(out). The enzyme catalyses UDP-N-acetyl-alpha-D-galactosamine(in) + UMP(out) = UDP-N-acetyl-alpha-D-galactosamine(out) + UMP(in). The catalysed reaction is UMP(out) + UDP-alpha-D-glucose(in) = UMP(in) + UDP-alpha-D-glucose(out). It catalyses the reaction UMP(out) + UDP-N-acetyl-alpha-D-glucosamine(in) = UMP(in) + UDP-N-acetyl-alpha-D-glucosamine(out). It carries out the reaction UDP-alpha-D-galactose(in) + AMP(out) = UDP-alpha-D-galactose(out) + AMP(in). The enzyme catalyses UDP-alpha-D-galactose(in) + CMP(out) = UDP-alpha-D-galactose(out) + CMP(in). The catalysed reaction is UDP-N-acetyl-alpha-D-galactosamine(out) + UDP-alpha-D-galactose(in) = UDP-N-acetyl-alpha-D-galactosamine(in) + UDP-alpha-D-galactose(out). It catalyses the reaction UDP-N-acetyl-alpha-D-glucosamine(out) + UDP-alpha-D-galactose(in) = UDP-N-acetyl-alpha-D-glucosamine(in) + UDP-alpha-D-galactose(out). It carries out the reaction UDP-alpha-D-galactose(in) + UDP-alpha-D-glucose(out) = UDP-alpha-D-galactose(out) + UDP-alpha-D-glucose(in). The enzyme catalyses UMP(out) + CMP(in) = UMP(in) + CMP(out). The catalysed reaction is UMP(out) + AMP(in) = UMP(in) + AMP(out). Transports uridine diphosphate galactose (UDP-galactose) from the cytosol into the Golgi apparatus, functioning as an antiporter that exchanges UDP-galactose for UMP. It is also able to exchange UDP-galactose for AMP and CMP, and to transport UDP-N-acetylgalactosamine (UDP-GalNAc) and other nucleotide sugars. As a provider of UDP-galactose to galactosyltransferases present in the Golgi apparatus, it is necessary for globotriaosylceramide/globoside (Gb3Cer) synthesis from lactosylceramide. The polypeptide is UDP-galactose translocator (Canis lupus familiaris (Dog)).